An 84-amino-acid polypeptide reads, in one-letter code: Beta-defensin 119 (84 aa).

The N-terminal stretch at 1–21 is a signal peptide; the sequence is MKLLYLFLAILLAIEEPVISG. 2 disulfide bridges follow: C35-C49 and C39-C56.

It belongs to the beta-defensin family.

The protein localises to the secreted. Functionally, has antibacterial activity. The chain is Beta-defensin 119 (DEFB119) from Pan troglodytes (Chimpanzee).